The sequence spans 181 residues: Adenine phosphoribosyltransferase (181 aa).

It belongs to the purine/pyrimidine phosphoribosyltransferase family. Homodimer.

The protein localises to the cytoplasm. It carries out the reaction AMP + diphosphate = 5-phospho-alpha-D-ribose 1-diphosphate + adenine. It participates in purine metabolism; AMP biosynthesis via salvage pathway; AMP from adenine: step 1/1. In terms of biological role, catalyzes a salvage reaction resulting in the formation of AMP, that is energically less costly than de novo synthesis. The chain is Adenine phosphoribosyltransferase from Chelativorans sp. (strain BNC1).